Reading from the N-terminus, the 248-residue chain is Ribosomal RNA small subunit methyltransferase J (248 aa).

Residues 98 to 99 (RD), 114 to 115 (ER), 150 to 151 (SS), and Asp-168 each bind S-adenosyl-L-methionine.

It belongs to the methyltransferase superfamily. RsmJ family.

It is found in the cytoplasm. The catalysed reaction is guanosine(1516) in 16S rRNA + S-adenosyl-L-methionine = N(2)-methylguanosine(1516) in 16S rRNA + S-adenosyl-L-homocysteine + H(+). Specifically methylates the guanosine in position 1516 of 16S rRNA. This is Ribosomal RNA small subunit methyltransferase J from Shewanella denitrificans (strain OS217 / ATCC BAA-1090 / DSM 15013).